Here is a 438-residue protein sequence, read N- to C-terminus: Phosphoribosylamine--glycine ligase (438 aa).

The ATP-grasp domain occupies 108–316 (REFMERNDIP…LVEIAEGIVK (209 aa)). 135 to 194 (IDEYGKPVVVKPLGLTGGKGVKVVGYQLKDNEEAKEYAEYLIKKDGKVLIEERTDGVEFT) serves as a coordination point for ATP. Mg(2+)-binding residues include Gln-274, Glu-286, and Asn-288. Residues Gln-274, Glu-286, and Asn-288 each contribute to the Mn(2+) site.

The protein belongs to the GARS family. Requires Mg(2+) as cofactor. It depends on Mn(2+) as a cofactor.

The catalysed reaction is 5-phospho-beta-D-ribosylamine + glycine + ATP = N(1)-(5-phospho-beta-D-ribosyl)glycinamide + ADP + phosphate + H(+). The protein operates within purine metabolism; IMP biosynthesis via de novo pathway; N(1)-(5-phospho-D-ribosyl)glycinamide from 5-phospho-alpha-D-ribose 1-diphosphate: step 2/2. The polypeptide is Phosphoribosylamine--glycine ligase (Pyrococcus abyssi (strain GE5 / Orsay)).